Reading from the N-terminus, the 77-residue chain is Large ribosomal subunit protein bL28 (77 aa).

It belongs to the bacterial ribosomal protein bL28 family.

The polypeptide is Large ribosomal subunit protein bL28 (Polynucleobacter asymbioticus (strain DSM 18221 / CIP 109841 / QLW-P1DMWA-1) (Polynucleobacter necessarius subsp. asymbioticus)).